The following is a 591-amino-acid chain: uncharacterized protein (591 aa).

The first 30 residues, 1–30, serve as a signal peptide directing secretion; the sequence is MGKLLFGKLVFKKSLFLLSGMSSLAVFLTA. Residue C31 is the site of N-palmitoyl cysteine attachment. C31 is lipidated: S-diacylglycerol cysteine. Over residues 476 to 488 the composition is skewed to basic and acidic residues; the sequence is KKKLSEVATKKNE. Disordered regions lie at residues 476–497 and 510–535; these read KKKL…NGSN and SSSS…DNDG. Low complexity predominate over residues 510-523; it reads SSSSTSMRNGSSDS.

To T.pallidum TmpC.

It is found in the cell membrane. This is an uncharacterized protein from Mycoplasma genitalium (strain ATCC 33530 / DSM 19775 / NCTC 10195 / G37) (Mycoplasmoides genitalium).